Consider the following 558-residue polypeptide: MADLSLPPDSLFLGFDSSTQSMKATVLDSNLNIIKTELVHFDSDLPQYKTKDGVYRDTTVNGRIVSPTLMWVEAFDLILQKLSNANFDFAKVIAVSGSGQQHGSVYWSKGSSEVLRSLDSKRSLKEQLENAFSVKESPIWMDSSTTLQCKEIENAVGGAMELSKITGSRAYERFTGPQIRKLFMTQGEVYKSTERISLVSSFMASLLVGDYACIDETDAAGMNLMDIEKRCWSKAALEATATGLEEKLGKLAPAYATAGSISQYFVQRFGFEKNCVVVQWSGDNPNSLAGLTLSTPGDLAISLGTSDTVFGITKELQPSLEGHVLPNPVDPESYMVMLVYKNASLTREEIRDRCAEGSWDVFNKYLQQTQPLNNGKLGFYYTENEILPPLPVGSHRYILENFSGESLEGVKEQEVGEFDPPSEVRALIEGQFLSKRAHTERFGMPSPPLRIIATGGASANENILSLISAIFGCDVYTVQRPDSASLGAALRAAHGWLCNKKGSFVPISNLYEGKLETTSLNCKLKVKAGDANIASTYGLLMKKRMEIENKLVEKLGHF.

Residues Asp-16, 20–23, Ser-111, and Asp-283 each bind substrate; that span reads QSMK. Residues Thr-305 and 456 to 460 each bind ATP; that span reads GASAN.

The protein belongs to the FGGY kinase family. It depends on a divalent metal cation as a cofactor.

It is found in the cytoplasm. It catalyses the reaction D-xylulose + ATP = D-xylulose 5-phosphate + ADP + H(+). It functions in the pathway isoprenoid biosynthesis; carotenoid biosynthesis. Its activity is regulated as follows. Repressed by oxo-clomazone (keto-clomazone), a bleaching herbicide. In terms of biological role, mediates 1-deoxy-D-xylulose (DX) phosphorylation in the cytoplasm prior to the translocation of 1-deoxy-D-xylulose 5-phosphate into plastids. Can also phosphorylate D-xylulose (Xyl). Uses preferentially ATP as cosubstrate. This chain is Xylulose kinase 2, found in Arabidopsis thaliana (Mouse-ear cress).